The chain runs to 154 residues: 6,7-dimethyl-8-ribityllumazine synthase (154 aa).

5-amino-6-(D-ribitylamino)uracil-binding positions include F15, 47–49 (TFD), and 71–73 (AVI). 76–77 (ET) is a binding site for (2S)-2-hydroxy-3-oxobutyl phosphate. The active-site Proton donor is H79. A 5-amino-6-(D-ribitylamino)uracil-binding site is contributed by L104. R119 contacts (2S)-2-hydroxy-3-oxobutyl phosphate.

The protein belongs to the DMRL synthase family.

It carries out the reaction (2S)-2-hydroxy-3-oxobutyl phosphate + 5-amino-6-(D-ribitylamino)uracil = 6,7-dimethyl-8-(1-D-ribityl)lumazine + phosphate + 2 H2O + H(+). It participates in cofactor biosynthesis; riboflavin biosynthesis; riboflavin from 2-hydroxy-3-oxobutyl phosphate and 5-amino-6-(D-ribitylamino)uracil: step 1/2. Catalyzes the formation of 6,7-dimethyl-8-ribityllumazine by condensation of 5-amino-6-(D-ribitylamino)uracil with 3,4-dihydroxy-2-butanone 4-phosphate. This is the penultimate step in the biosynthesis of riboflavin. This chain is 6,7-dimethyl-8-ribityllumazine synthase, found in Saccharolobus solfataricus (strain ATCC 35092 / DSM 1617 / JCM 11322 / P2) (Sulfolobus solfataricus).